Consider the following 166-residue polypeptide: Urocortin-3 (166 aa).

The signal sequence occupies residues 1-23 (MLVPAPFLLVLLLLLGAPQVGLS). The propeptide occupies 24–123 (QRSPKAGSSP…QDKAKSDRRT (100 aa)). Residues 41–51 (REAEKSQRKDT) show a composition bias toward basic and acidic residues. The segment at 41–123 (REAEKSQRKD…QDKAKSDRRT (83 aa)) is disordered. The span at 68-77 (EDQEGQEEED) shows a compositional bias: acidic residues. Over residues 86 to 96 (SVGGGGGGGAG) the composition is skewed to gly residues. The span at 113–123 (SQDKAKSDRRT) shows a compositional bias: basic and acidic residues. An Isoleucine amide modification is found at isoleucine 162.

The protein belongs to the sauvagine/corticotropin-releasing factor/urotensin I family. As to quaternary structure, binds with high affinity to CRF receptors 2-alpha and 2-beta.

It is found in the secreted. Suppresses food intake, delays gastric emptying and decreases heat-induced edema. Might represent an endogenous ligand for maintaining homeostasis after stress. The polypeptide is Urocortin-3 (UCN3) (Bos taurus (Bovine)).